We begin with the raw amino-acid sequence, 281 residues long: Undecaprenyl-diphosphatase (281 aa).

A run of 8 helical transmembrane segments spans residues 4–24, 45–65, 89–109, 113–133, 152–172, 190–210, 225–245, and 257–277; these read IEILKSIFFGIVEGITEWLPI, AFMSMFNVVIQLGAILAVMVI, WLKVLIATLPLLGVFKFDDWF, FHNMVSVALMLIIYGVAFIYL, LPYTTAFYIGLFQVLALLPGT, SVVTEFTFYLGIPVMFGASAL, GQLFLLLVAMGVAFAVSMVAI, and FTLFGKYRIVLGSVLLLYSFV.

Belongs to the UppP family.

Its subcellular location is the cell membrane. The catalysed reaction is di-trans,octa-cis-undecaprenyl diphosphate + H2O = di-trans,octa-cis-undecaprenyl phosphate + phosphate + H(+). In terms of biological role, catalyzes the dephosphorylation of undecaprenyl diphosphate (UPP). Confers resistance to bacitracin. This chain is Undecaprenyl-diphosphatase, found in Streptococcus pneumoniae (strain Hungary19A-6).